A 170-amino-acid chain; its full sequence is Adenine phosphoribosyltransferase (170 aa).

Belongs to the purine/pyrimidine phosphoribosyltransferase family. As to quaternary structure, homodimer.

Its subcellular location is the cytoplasm. It catalyses the reaction AMP + diphosphate = 5-phospho-alpha-D-ribose 1-diphosphate + adenine. Its pathway is purine metabolism; AMP biosynthesis via salvage pathway; AMP from adenine: step 1/1. Its function is as follows. Catalyzes a salvage reaction resulting in the formation of AMP, that is energically less costly than de novo synthesis. The chain is Adenine phosphoribosyltransferase from Mycoplasma capricolum subsp. capricolum (strain California kid / ATCC 27343 / NCTC 10154).